Reading from the N-terminus, the 171-residue chain is Cation channel sperm-associated auxiliary subunit TMEM249 (171 aa).

The Cytoplasmic portion of the chain corresponds to 1–2 (ML). The helical transmembrane segment at 3-17 (FIICLVFISCNVLRE) threads the bilayer. At 18-28 (VKYQETWCFPA) the chain is on the extracellular side. A helical transmembrane segment spans residues 29-40 (YGMVIGLWLMLS). Over 41-171 (SIPQRRLVLN…TKSSVNDLDV (131 aa)) the chain is Cytoplasmic.

Component of the CatSper complex or CatSpermasome composed of the core pore-forming members CATSPER1, CATSPER2, CATSPER3 and CATSPER4 as well as auxiliary members CATSPERB, CATSPERG2, CATSPERD, CATSPERE, CATSPERZ, C2CD6/CATSPERT, SLCO6C1, TMEM249, TMEM262 and EFCAB9. HSPA1 may be an additional auxiliary complex member. The core complex members CATSPER1, CATSPER2, CATSPER3 and CATSPER4 form a heterotetrameric channel. The auxiliary CATSPERB, CATSPERG2, CATSPERD and CATSPERE subunits form a pavilion-like structure over the pore which stabilizes the complex through interactions with CATSPER4, CATSPER3, CATSPER1 and CATSPER2 respectively. SLCO6C1 interacts with CATSPERE and TMEM262/CATSPERH interacts with CATSPERB, further stabilizing the complex. C2CD6/CATSPERT interacts at least with CATSPERD and is required for targeting the CatSper complex in the flagellar membrane.

Its subcellular location is the cell projection. It is found in the cilium. The protein resides in the flagellum membrane. Its function is as follows. Auxiliary component of the CatSper complex, a complex involved in sperm cell hyperactivation. The sequence is that of Cation channel sperm-associated auxiliary subunit TMEM249 from Mus musculus (Mouse).